A 428-amino-acid polypeptide reads, in one-letter code: Ribulose bisphosphate carboxylase (428 aa).

The Proton acceptor role is filled by Lys151. Substrate is bound at residue Lys153. Residues Lys177, Asp179, and Glu180 each coordinate Mg(2+). Lys177 carries the N6-carboxylysine modification. His270 acts as the Proton acceptor in catalysis. Substrate is bound by residues Arg271, His303, 354–356 (SGG), and 376–379 (QFGG).

The protein belongs to the RuBisCO large chain family. Type III subfamily. As to quaternary structure, homodimer or homodecamer. In contrast to form I RuBisCO, the form III RuBisCO is composed solely of large subunits. Mg(2+) is required as a cofactor.

The catalysed reaction is 2 (2R)-3-phosphoglycerate + 2 H(+) = D-ribulose 1,5-bisphosphate + CO2 + H2O. It carries out the reaction D-ribulose 1,5-bisphosphate + O2 = 2-phosphoglycolate + (2R)-3-phosphoglycerate + 2 H(+). In terms of biological role, catalyzes the addition of molecular CO(2) and H(2)O to ribulose 1,5-bisphosphate (RuBP), generating two molecules of 3-phosphoglycerate (3-PGA). Functions in an archaeal AMP degradation pathway, together with AMP phosphorylase and R15P isomerase. The polypeptide is Ribulose bisphosphate carboxylase (Methanosarcina mazei (strain ATCC BAA-159 / DSM 3647 / Goe1 / Go1 / JCM 11833 / OCM 88) (Methanosarcina frisia)).